The following is a 329-amino-acid chain: UPF0421 protein SH1063 (329 aa).

Transmembrane regions (helical) follow at residues 25–45, 60–80, 87–107, 108–128, and 131–151; these read LFCL…IVTI, LPAT…FGDP, FSAL…GTTV, AVLT…FNFF, and LLTA…VLPP.

Belongs to the UPF0421 family.

It localises to the cell membrane. The chain is UPF0421 protein SH1063 from Staphylococcus haemolyticus (strain JCSC1435).